We begin with the raw amino-acid sequence, 328 residues long: GTP cyclohydrolase MptA (328 aa).

This sequence belongs to the GTP cyclohydrolase IV family. As to quaternary structure, homodimer. Requires Fe(2+) as cofactor.

The enzyme catalyses GTP + H2O = 7,8-dihydroneopterin 2',3'-cyclic phosphate + formate + diphosphate + H(+). Its pathway is cofactor biosynthesis; 5,6,7,8-tetrahydromethanopterin biosynthesis. In terms of biological role, converts GTP to 7,8-dihydro-D-neopterin 2',3'-cyclic phosphate, the first intermediate in the biosynthesis of coenzyme methanopterin. The protein is GTP cyclohydrolase MptA of Methanospirillum hungatei JF-1 (strain ATCC 27890 / DSM 864 / NBRC 100397 / JF-1).